Reading from the N-terminus, the 292-residue chain is ATP synthase gamma chain (292 aa).

It belongs to the ATPase gamma chain family. In terms of assembly, F-type ATPases have 2 components, CF(1) - the catalytic core - and CF(0) - the membrane proton channel. CF(1) has five subunits: alpha(3), beta(3), gamma(1), delta(1), epsilon(1). CF(0) has three main subunits: a, b and c.

The protein resides in the cell membrane. Its function is as follows. Produces ATP from ADP in the presence of a proton gradient across the membrane. The gamma chain is believed to be important in regulating ATPase activity and the flow of protons through the CF(0) complex. The chain is ATP synthase gamma chain from Caldicellulosiruptor saccharolyticus (strain ATCC 43494 / DSM 8903 / Tp8T 6331).